The primary structure comprises 135 residues: ATP synthase epsilon chain (135 aa).

This sequence belongs to the ATPase epsilon chain family. In terms of assembly, F-type ATPases have 2 components, CF(1) - the catalytic core - and CF(0) - the membrane proton channel. CF(1) has five subunits: alpha(3), beta(3), gamma(1), delta(1), epsilon(1). CF(0) has three main subunits: a, b and c.

Its subcellular location is the cell inner membrane. Functionally, produces ATP from ADP in the presence of a proton gradient across the membrane. In Rhodopseudomonas palustris (strain BisB18), this protein is ATP synthase epsilon chain.